A 288-amino-acid polypeptide reads, in one-letter code: Pyridoxal kinase PdxY (288 aa).

Substrate is bound by residues Ser-12 and 47–48; that span reads TQ. Residues Asp-114, Glu-151, Lys-184, and 211-214 contribute to the ATP site; that span reads RPLL. Asp-225 contacts substrate.

The protein belongs to the pyridoxine kinase family. PdxY subfamily. Homodimer. It depends on Mg(2+) as a cofactor.

The enzyme catalyses pyridoxal + ATP = pyridoxal 5'-phosphate + ADP + H(+). It functions in the pathway cofactor metabolism; pyridoxal 5'-phosphate salvage; pyridoxal 5'-phosphate from pyridoxal: step 1/1. Functionally, pyridoxal kinase involved in the salvage pathway of pyridoxal 5'-phosphate (PLP). Catalyzes the phosphorylation of pyridoxal to PLP. This Pseudomonas paraeruginosa (strain DSM 24068 / PA7) (Pseudomonas aeruginosa (strain PA7)) protein is Pyridoxal kinase PdxY.